The chain runs to 445 residues: Histidinol dehydrogenase (445 aa).

Residues Y136, Q200, and N228 each coordinate NAD(+). Residues T251, Q273, and H276 each coordinate substrate. Positions 273 and 276 each coordinate Zn(2+). Active-site proton acceptor residues include E342 and H343. Residues H343, D376, E430, and H435 each contribute to the substrate site. Residue D376 coordinates Zn(2+). Residue H435 coordinates Zn(2+).

It belongs to the histidinol dehydrogenase family. It depends on Zn(2+) as a cofactor.

It carries out the reaction L-histidinol + 2 NAD(+) + H2O = L-histidine + 2 NADH + 3 H(+). It participates in amino-acid biosynthesis; L-histidine biosynthesis; L-histidine from 5-phospho-alpha-D-ribose 1-diphosphate: step 9/9. In terms of biological role, catalyzes the sequential NAD-dependent oxidations of L-histidinol to L-histidinaldehyde and then to L-histidine. This is Histidinol dehydrogenase (hisD) from Mycolicibacterium smegmatis (Mycobacterium smegmatis).